The following is a 203-amino-acid chain: Urease accessory protein UreG (203 aa).

14–21 (GPVGSGKT) provides a ligand contact to GTP.

It belongs to the SIMIBI class G3E GTPase family. UreG subfamily. Homodimer. UreD, UreF and UreG form a complex that acts as a GTP-hydrolysis-dependent molecular chaperone, activating the urease apoprotein by helping to assemble the nickel containing metallocenter of UreC. The UreE protein probably delivers the nickel.

It localises to the cytoplasm. Its function is as follows. Facilitates the functional incorporation of the urease nickel metallocenter. This process requires GTP hydrolysis, probably effectuated by UreG. This is Urease accessory protein UreG from Rhizobium etli (strain ATCC 51251 / DSM 11541 / JCM 21823 / NBRC 15573 / CFN 42).